The following is a 220-amino-acid chain: Polyadenylate-binding protein 2 (220 aa).

A disordered region spans residues M1 to E24. Residues A34–Q74 adopt a coiled-coil conformation. A necessary for homooligomerization region spans residues S78–Y219. Residues R92–T168 enclose the RRM domain. Residues Q165–G172 carry the Nuclear localization signal motif.

In terms of assembly, monomer and homooligomer. Binds RNA as a monomer and oligomerizes when bound to poly(A). Forms a complex with cleavage and polyadenylation specificity factor (CPSF) subunits PAPS2, FIPS5, PABN3 and PABN1. Interacts with CSP3.

The protein localises to the nucleus speckle. Its subcellular location is the cytoplasm. Involved in the 3'-end formation of mRNA precursors (pre-mRNA) by the addition of a poly(A) tail of 200-250 nt to the upstream cleavage product. Stimulates poly(A) polymerase (PAPOLA) conferring processivity on the poly(A) tail elongation reaction and also controls the poly(A) tail length. Increases the affinity of poly(A) polymerase for RNA. Binds to poly(A) and to poly(G) with high affinity. May protect the poly(A) tail from degradation. The polypeptide is Polyadenylate-binding protein 2 (Arabidopsis thaliana (Mouse-ear cress)).